Reading from the N-terminus, the 617-residue chain is Protein fem-1 homolog A (617 aa).

ANK repeat units lie at residues 2-32, 40-70, 82-111, 115-144, 148-177, 181-210, and 213-242; these read DISA…EERA, EGGT…NVAL, EGAP…PVNN, TNST…DLEV, HGHT…DVNR, KGNT…RMER, and YGMT…ASRE. TPR repeat units lie at residues 245 to 279 and 339 to 372; these read IHAL…RWAG and SYYI…QQSN. ANK repeat units lie at residues 482–524 and 528–557; these read GGHT…DVDS and DNNT…HFDA.

Belongs to the fem-1 family. In terms of assembly, component of a CRL2 E3 ubiquitin-protein ligase complex, also named ECS (Elongin BC-CUL2/5-SOCS-box protein) complex.

It localises to the mitochondrion. The protein resides in the cytoplasm. Its pathway is protein modification; protein ubiquitination. In terms of biological role, substrate-recognition component of a Cul2-RING (CRL2) E3 ubiquitin-protein ligase complex of the DesCEND (destruction via C-end degrons) pathway, which recognizes a C-degron located at the extreme C terminus of target proteins, leading to their ubiquitination and degradation. The C-degron recognized by the DesCEND pathway is usually a motif of less than ten residues and can be present in full-length proteins, truncated proteins or proteolytically cleaved forms. The CRL2(FEM1A) complex specifically recognizes proteins with an arginine at the C-terminus: recognizes and binds proteins ending with -Lys/Arg-Xaa-Arg and -Lys/Arg-Xaa-Xaa-Arg C-degrons, leading to their ubiquitination and degradation. This is Protein fem-1 homolog A from Danio rerio (Zebrafish).